Consider the following 183-residue polypeptide: Ribosome rescue factor SmrB (183 aa).

One can recognise a Smr domain in the interval 98 to 173 (LDLHGLTQLQ…GDAALLVLIE (76 aa)).

It belongs to the SmrB family. In terms of assembly, associates with collided ribosomes, but not with correctly translating polysomes.

Its function is as follows. Acts as a ribosome collision sensor. Detects stalled/collided disomes (pairs of ribosomes where the leading ribosome is stalled and a second ribosome has collided with it) and endonucleolytically cleaves mRNA at the 5' boundary of the stalled ribosome. Stalled/collided disomes form a new interface (primarily via the 30S subunits) that binds SmrB. Cleaved mRNA becomes available for tmRNA ligation, leading to ribosomal subunit dissociation and rescue of stalled ribosomes. In Escherichia coli O17:K52:H18 (strain UMN026 / ExPEC), this protein is Ribosome rescue factor SmrB.